A 526-amino-acid polypeptide reads, in one-letter code: Clostripain (526 aa).

Residues 1–27 (MLRRKVSTLLMTALITTSFLNSKPVYA) form the signal peptide. A propeptide spanning residues 28 to 50 (NPVTKSKDNNLKEVQQVTSKSNK) is cleaved from the precursor. The propeptide at 182-190 (EKSNPRLNR) is linker. Cys231 functions as the Nucleophile in the catalytic mechanism.

This sequence belongs to the peptidase C11 family. Heterodimer of a light chain and a heavy chain held together by strong non-covalent forces rather than by intramolecular disulfide bridges.

It catalyses the reaction Preferential cleavage: Arg-|-Xaa, including Arg-|-Pro bond, but not Lys-|-Xaa.. Functionally, cysteine endopeptidase with strict specificity. This is Clostripain (cloSI) from Hathewaya histolytica (Clostridium histolyticum).